The sequence spans 105 residues: MRKIRTGDEVIVIAGKDKGRRGRVSRVIPEKDRVIVDNVNMVKRHTRGNPMQGTTGGIIEKEAPIHISNVAIYNPETEKADRVGVRQEGDRKVRYFKSNQQLIDA.

Belongs to the universal ribosomal protein uL24 family. Part of the 50S ribosomal subunit.

Its function is as follows. One of two assembly initiator proteins, it binds directly to the 5'-end of the 23S rRNA, where it nucleates assembly of the 50S subunit. One of the proteins that surrounds the polypeptide exit tunnel on the outside of the subunit. This is Large ribosomal subunit protein uL24 from Halorhodospira halophila (strain DSM 244 / SL1) (Ectothiorhodospira halophila (strain DSM 244 / SL1)).